An 80-amino-acid polypeptide reads, in one-letter code: Cytochrome c oxidase subunit 7A1, mitochondrial (80 aa).

The N-terminal 21 residues, 1–21 (MRALRVSQALVRSFSSSTRSH), are a transit peptide targeting the mitochondrion. The Mitochondrial matrix portion of the chain corresponds to 22-46 (LENRVAEKQKLFQADNDLPVHLKGG). A helical membrane pass occupies residues 47–75 (GMDNVLYRLTMTLTLGGTAYCLYCLGWAS). Topologically, residues 76–80 (FPHKK) are mitochondrial intermembrane.

This sequence belongs to the cytochrome c oxidase VIIa family. As to quaternary structure, component of the complex IV (CIV, cytochrome c oxidase), a multisubunit enzyme composed of 14 subunits. The complex is composed of a catalytic core of 3 subunits MT-CO1, MT-CO2 and MT-CO3, encoded in the mitochondrial DNA, and 11 supernumerary subunits COX4I, COX5A, COX5B, COX6A, COX6B, COX6C, COX7A, COX7B, COX7C, COX8 and NDUFA4, which are encoded in the nuclear genome. The complex exists as a monomer or a dimer and forms supercomplexes (SCs) in the inner mitochondrial membrane with NADH-ubiquinone oxidoreductase (complex I, CI) and ubiquinol-cytochrome c oxidoreductase (cytochrome b-c1 complex, complex III, CIII), resulting in different assemblies (supercomplex SCI(1)III(2)IV(1) and megacomplex MCI(2)III(2)IV(2)).

Its subcellular location is the mitochondrion inner membrane. The protein operates within energy metabolism; oxidative phosphorylation. Functionally, component of the mitochondrial respiratory complex IV (CIV, also named cytochrome c oxidase complex), the last enzyme in the mitochondrial electron transport chain which drives oxidative phosphorylation. The CIV complex is the component of the respiratory chain that catalyzes the reduction of oxygen to water. Acts as an assembly factor that specifically drives the homodimerization of CIV complexes, mediating the formation of mitochondrial respiratory supercomplexes (respirasomes) containing two CIV: supercomplxes with two molecules of CIV show improved activity. Despite being highly expressed in brown adipose tissue, not required for thermogenesis. The chain is Cytochrome c oxidase subunit 7A1, mitochondrial from Mus musculus (Mouse).